The sequence spans 600 residues: Dihydroxy-acid dehydratase (600 aa).

Asp82 contacts Mg(2+). Cys123 is a binding site for [2Fe-2S] cluster. Mg(2+) is bound by residues Asp124 and Lys125. At Lys125 the chain carries N6-carboxylysine. Cys192 contacts [2Fe-2S] cluster. Glu489 lines the Mg(2+) pocket. Ser515 functions as the Proton acceptor in the catalytic mechanism.

It belongs to the IlvD/Edd family. As to quaternary structure, homodimer. It depends on [2Fe-2S] cluster as a cofactor. The cofactor is Mg(2+).

It carries out the reaction (2R)-2,3-dihydroxy-3-methylbutanoate = 3-methyl-2-oxobutanoate + H2O. The catalysed reaction is (2R,3R)-2,3-dihydroxy-3-methylpentanoate = (S)-3-methyl-2-oxopentanoate + H2O. The protein operates within amino-acid biosynthesis; L-isoleucine biosynthesis; L-isoleucine from 2-oxobutanoate: step 3/4. Its pathway is amino-acid biosynthesis; L-valine biosynthesis; L-valine from pyruvate: step 3/4. Functions in the biosynthesis of branched-chain amino acids. Catalyzes the dehydration of (2R,3R)-2,3-dihydroxy-3-methylpentanoate (2,3-dihydroxy-3-methylvalerate) into 2-oxo-3-methylpentanoate (2-oxo-3-methylvalerate) and of (2R)-2,3-dihydroxy-3-methylbutanoate (2,3-dihydroxyisovalerate) into 2-oxo-3-methylbutanoate (2-oxoisovalerate), the penultimate precursor to L-isoleucine and L-valine, respectively. The polypeptide is Dihydroxy-acid dehydratase (Bacteroides thetaiotaomicron (strain ATCC 29148 / DSM 2079 / JCM 5827 / CCUG 10774 / NCTC 10582 / VPI-5482 / E50)).